We begin with the raw amino-acid sequence, 184 residues long: Large ribosomal subunit protein uL6 (184 aa).

The protein belongs to the universal ribosomal protein uL6 family. In terms of assembly, part of the 50S ribosomal subunit.

In terms of biological role, this protein binds to the 23S rRNA, and is important in its secondary structure. It is located near the subunit interface in the base of the L7/L12 stalk, and near the tRNA binding site of the peptidyltransferase center. The sequence is that of Large ribosomal subunit protein uL6 from Mycoplasma pneumoniae (strain ATCC 29342 / M129 / Subtype 1) (Mycoplasmoides pneumoniae).